Reading from the N-terminus, the 566-residue chain is Putative ABC transporter ATP-binding protein BA_2641/GBAA_2641/BAS2461 (566 aa).

2 ABC transporter domains span residues Ile-5–Glu-246 and Leu-300–Lys-533. ATP contacts are provided by residues Gly-39–Ser-46 and Gly-333–Ser-340.

It belongs to the ABC transporter superfamily.

The protein localises to the cell membrane. In terms of biological role, probably part of an ABC transporter complex. Responsible for energy coupling to the transport system. This is Putative ABC transporter ATP-binding protein BA_2641/GBAA_2641/BAS2461 from Bacillus anthracis.